The following is a 192-amino-acid chain: Adenylate kinase (192 aa).

Residue 10 to 18 (GVPGVGGTT) coordinates ATP.

This sequence belongs to the archaeal adenylate kinase family. In terms of assembly, monomer.

It localises to the cytoplasm. The catalysed reaction is AMP + ATP = 2 ADP. This chain is Adenylate kinase (adkA), found in Methanotorris igneus (Methanococcus igneus).